Consider the following 476-residue polypeptide: Stromelysin-2 (476 aa).

Residues 1–17 (MEPLAILALLSLPICSA) form the signal peptide. Residues 18-99 (YPLHGAVTQG…PRCGVPDVGG (82 aa)) constitute a propeptide, activation peptide. Residues 90–97 (PRCGVPDV) carry the Cysteine switch motif. Cys-92, His-168, Asp-170, His-183, His-196, and His-218 together coordinate Zn(2+). Residue Glu-219 is part of the active site. Zn(2+)-binding residues include His-222 and His-228. Hemopexin repeat units lie at residues 286 to 335 (PDKC…WPTL), 336 to 382 (PSDL…GFPP), 384 to 432 (VKKI…FPGI), and 433 to 476 (EPQV…WLLC). Cys-289 and Cys-476 are disulfide-bonded.

This sequence belongs to the peptidase M10A family. Requires Zn(2+) as cofactor. Ca(2+) serves as cofactor. In terms of tissue distribution, expressed in small intestine. Weak levels in heart and lung.

Its subcellular location is the secreted. The protein resides in the extracellular space. It is found in the extracellular matrix. It carries out the reaction Similar to stromelysin 1, but action on collagen types III, IV and V is weak.. Its function is as follows. Can degrade fibronectin, gelatins of type I, III, IV, and V; weakly collagens III, IV, and V. Activates procollagenase. The protein is Stromelysin-2 (Mmp10) of Mus musculus (Mouse).